We begin with the raw amino-acid sequence, 1120 residues long: Topless-related protein 1 (1120 aa).

A LisH domain is found at 4 to 36; sequence LSRELVFLILQFLDEEKFKETVHKLEQESGFFF. The CTLH domain occupies 34–92; the sequence is FFFNMKYFEDEVHNGNWDEVEKYLSGFTKVDDNRYSMKIFFEIRKQKYLEALDRHDRPK. Disordered stretches follow at residues 210 to 235 and 283 to 307; these read ARAP…PLGA and HPRT…SKRT. Ser-214 carries the post-translational modification Phosphoserine. WD repeat units follow at residues 353–393, 415–454, 460–501, 504–545, 548–591, 595–634, 639–678, 699–745, 755–794, 822–860, 863–903, 906–945, 999–1038, and 1052–1091; these read SQGS…RLVQ, EPVV…DMRQ, AHVG…KRYT, GHEA…SRVD, APGR…VKRT, FHKR…LLTA, GGLQ…RLLH, ERPA…EPSQ, MRVT…RNAT, NPEE…TMAT, PPPP…VKSK, GHSK…KQKS, ESAA…LRCR, and SNVH…GKWG. The segment at 1087–1120 is disordered; the sequence is EGKWGVAPPPENGSASAVTATPSVGASASDQPQR. The segment covering 1099 to 1120 has biased composition (polar residues); the sequence is GSASAVTATPSVGASASDQPQR.

As to quaternary structure, tetramer. Interacts with SNC1 (via TIR domain) and HDA19. Interacts with SPL (via EAR motif). Interacts with SPEAR3/TIE1. Binds to and corepresses GAF1/IDD2. Highly expressed in stamen primordium, microsporocyte, ovule primordium and megasporocyte during sporogenesis.

The protein localises to the nucleus. Functionally, transcriptional corepressor. Activates TIR-NB-LRR R protein-mediated immune responses through repression of negative regulators such as CNGC2/DND1. Negative regulator of jasmonate responses. The polypeptide is Topless-related protein 1 (TPR1) (Arabidopsis thaliana (Mouse-ear cress)).